The following is a 35-amino-acid chain: Pheromone-binding protein (35 aa).

It belongs to the PBP/GOBP family. As to expression, antenna.

Functionally, this major soluble protein in olfactory sensilla of male moths might serve to solubilize the extremely hydrophobic pheromone molecules and to transport pheromone through the aqueous lymph to receptors located on olfactory cilia. In Hyalophora cecropia (Cecropia moth), this protein is Pheromone-binding protein.